Here is a 372-residue protein sequence, read N- to C-terminus: Cell division protein FtsZ 1 (372 aa).

Residues 51-55, 138-140, Glu169, Arg173, and Asp216 contribute to the GTP site; these read GAGCN and GTG. Residues 352–372 are disordered; that stretch reads EETPAPSEEETTPVKIDIPEL.

The protein belongs to the FtsZ family. Homodimer. Polymerizes to form a dynamic ring structure in a strictly GTP-dependent manner. Interacts directly with several other division proteins.

It localises to the cytoplasm. In terms of biological role, essential cell division protein that forms a contractile ring structure (Z ring) at the future cell division site. The regulation of the ring assembly controls the timing and the location of cell division. One of the functions of the FtsZ ring is to recruit other cell division proteins to the septum to produce a new cell wall between the dividing cells. Binds GTP and shows GTPase activity. In Pyrococcus horikoshii (strain ATCC 700860 / DSM 12428 / JCM 9974 / NBRC 100139 / OT-3), this protein is Cell division protein FtsZ 1.